The following is a 424-amino-acid chain: Na(+)/H(+) antiporter NhaA (424 aa).

The next 11 membrane-spanning stretches (helical) occupy residues 23-43, 65-85, 102-122, 131-151, 160-180, 183-203, 211-231, 265-285, 303-323, 341-361, and 373-393; these read ILLI…LATL, VHLW…GLEI, LPFI…MFFV, GWAI…ALLG, LFLV…IALF, AKIN…MFAC, LLVY…SGVH, ALHP…NAGV, IAAG…WLAV, AVSM…SLAF, and IGIL…LRLA.

The protein belongs to the NhaA Na(+)/H(+) (TC 2.A.33) antiporter family.

It localises to the cell inner membrane. It catalyses the reaction Na(+)(in) + 2 H(+)(out) = Na(+)(out) + 2 H(+)(in). Its function is as follows. Na(+)/H(+) antiporter that extrudes sodium in exchange for external protons. The sequence is that of Na(+)/H(+) antiporter NhaA from Sphingopyxis alaskensis (strain DSM 13593 / LMG 18877 / RB2256) (Sphingomonas alaskensis).